A 294-amino-acid polypeptide reads, in one-letter code: Deubiquitinase OTUD6B (294 aa).

Disordered stretches follow at residues Met1–Leu46 and Ala67–Glu120. Polar residues-rich tracts occupy residues Lys27–Pro36 and Pro73–Thr86. Over residues Lys111 to Glu120 the composition is skewed to basic and acidic residues. The region spanning Leu150–Leu287 is the OTU domain. The interval Ile155–Cys161 is cys-loop. Asp158 is an active-site residue. Residue Cys161 is the Nucleophile of the active site. The tract at residues Ile222 to Leu232 is variable-loop. Residues Tyr270–His280 form a his-loop region. His280 is an active-site residue.

It catalyses the reaction Thiol-dependent hydrolysis of ester, thioester, amide, peptide and isopeptide bonds formed by the C-terminal Gly of ubiquitin (a 76-residue protein attached to proteins as an intracellular targeting signal).. In terms of biological role, deubiquitinating enzyme that may play a role in the ubiquitin-dependent regulation of different cellular processes. This chain is Deubiquitinase OTUD6B (otud6b), found in Xenopus tropicalis (Western clawed frog).